Reading from the N-terminus, the 658-residue chain is MAKSGEALPQGSLAPAQDSQLIRVTVKTPKDKEDFSVVDTCTIRQLKEKISHRFKAHPNQLVLIFAGKILKDPDSLAQCGVRDGLTVHLVIKMQRRTIGTECPSPPVSIPGPNPGEIPQSSSVYSVDGSPSFSLGVLTGLSGLGLTSGSFSDQPGSLMWQHISVPELVAQLVDDPFIQGLLSNTGLVRQLVLDNPHMQHLIQQNPEIGHILNNPEIMRQTMEFLRNPSMMQEMMRSQDRALSNLESIPGGYNVLRTMYTDIMDPMLNAVQEQFGGNPFVTATTASTTTTSSQPSRTENCDPLPNPWTSTYGVSGGRQGRGGRQSGDQDASENRNRLPSFLGNIGLFDYLQQLHETSQSLESYLQGTVPTSNPSQESPLSGNRVPPTLPSSPKSGSGQSLPKESVAIKGKSSCPAFLRHSTENSTGQGGSLHDAGKGSTGPSTSLPNLTSQIGDSANRSSFVSTPSSLMSATPGVPESPWLPPTGYSRSLRSAGTNQVPRIQNEIHQQLPLLLHLQTAMANPRVMQALLQIEQGLQILATEAPRLLLWFMPCLTGLNGVTGGTEAREGVVMSEDPRPTPTPQISLAQGSTELGIHSSPFLQVLQALASTNPQQLQLEAHFRVQLEQLRAMGFLNLEANLQALIATEGDVDAAVEKLRKS.

The 75-residue stretch at I22–R96 folds into the Ubiquitin-like domain. The STI1 domain occupies N194–M233. The span at T280–S291 shows a compositional bias: low complexity. Disordered regions lie at residues T280 to L336 and Y362 to P478. Residues V312 to Q323 show a composition bias toward gly residues. Polar residues-rich tracts occupy residues Y362–S379, S389–P400, and T438–S469. The UBA domain maps to Q614 to S658.

Testis-specific (at protein level).

The chain is Ubiquilin-3 (Ubqln3) from Mus musculus (Mouse).